A 185-amino-acid chain; its full sequence is Elongation factor P (185 aa).

Belongs to the elongation factor P family.

The protein resides in the cytoplasm. Its pathway is protein biosynthesis; polypeptide chain elongation. Involved in peptide bond synthesis. Stimulates efficient translation and peptide-bond synthesis on native or reconstituted 70S ribosomes in vitro. Probably functions indirectly by altering the affinity of the ribosome for aminoacyl-tRNA, thus increasing their reactivity as acceptors for peptidyl transferase. This Geobacillus thermodenitrificans (strain NG80-2) protein is Elongation factor P.